The primary structure comprises 258 residues: Phosphate import ATP-binding protein PstB (258 aa).

The region spanning 13 to 253 (ITVENLNLWY…PREKSTEDYI (241 aa)) is the ABC transporter domain. Residue 45–52 (GPSGCGKS) coordinates ATP.

The protein belongs to the ABC transporter superfamily. Phosphate importer (TC 3.A.1.7) family. As to quaternary structure, the complex is composed of two ATP-binding proteins (PstB), two transmembrane proteins (PstC and PstA) and a solute-binding protein (PstS).

It is found in the cell membrane. The enzyme catalyses phosphate(out) + ATP + H2O = ADP + 2 phosphate(in) + H(+). Functionally, part of the ABC transporter complex PstSACB involved in phosphate import. Responsible for energy coupling to the transport system. The protein is Phosphate import ATP-binding protein PstB of Methanosarcina mazei (strain ATCC BAA-159 / DSM 3647 / Goe1 / Go1 / JCM 11833 / OCM 88) (Methanosarcina frisia).